The primary structure comprises 334 residues: Cytochrome c biogenesis protein CcsA (334 aa).

8 helical membrane passes run 12 to 32, 35 to 55, 67 to 87, 96 to 116, 141 to 161, 242 to 262, 277 to 297, and 303 to 323; these read NTAF…VVFP, WLVQ…TALL, ISNL…VHFI, FVGA…ALTL, VMMV…AFLF, IIGL…VWAN, WALI…TKGW, and AILA…VNLL.

This sequence belongs to the CcmF/CycK/Ccl1/NrfE/CcsA family. May interact with ccs1.

It is found in the cellular thylakoid membrane. Functionally, required during biogenesis of c-type cytochromes (cytochrome c6 and cytochrome f) at the step of heme attachment. In Synechocystis sp. (strain ATCC 27184 / PCC 6803 / Kazusa), this protein is Cytochrome c biogenesis protein CcsA.